Consider the following 258-residue polypeptide: Acyl-[acyl-carrier-protein]--UDP-N-acetylglucosamine O-acyltransferase (258 aa).

Belongs to the transferase hexapeptide repeat family. LpxA subfamily. Homotrimer.

The protein resides in the cytoplasm. It catalyses the reaction a (3R)-hydroxyacyl-[ACP] + UDP-N-acetyl-alpha-D-glucosamine = a UDP-3-O-[(3R)-3-hydroxyacyl]-N-acetyl-alpha-D-glucosamine + holo-[ACP]. The protein operates within glycolipid biosynthesis; lipid IV(A) biosynthesis; lipid IV(A) from (3R)-3-hydroxytetradecanoyl-[acyl-carrier-protein] and UDP-N-acetyl-alpha-D-glucosamine: step 1/6. Functionally, involved in the biosynthesis of lipid A, a phosphorylated glycolipid that anchors the lipopolysaccharide to the outer membrane of the cell. The chain is Acyl-[acyl-carrier-protein]--UDP-N-acetylglucosamine O-acyltransferase from Syntrophobacter fumaroxidans (strain DSM 10017 / MPOB).